The chain runs to 258 residues: Isoprenyl transferase 2 (258 aa).

Over residues 1–18 the composition is skewed to pro residues; it reads MNFPPIHPSTPKMTPPDL. Residues 1–21 are disordered; it reads MNFPPIHPSTPKMTPPDLDPQ. The active site involves aspartate 32. Aspartate 32 serves as a coordination point for Mg(2+). Substrate contacts are provided by residues 33–36, tryptophan 37, arginine 45, histidine 49, and 77–79; these read GNGR and STE. The Proton acceptor role is filled by asparagine 80. Residues tryptophan 81, arginine 83, arginine 200, and 206–208 each bind substrate; that span reads RLS. A Mg(2+)-binding site is contributed by glutamate 219.

Belongs to the UPP synthase family. Homodimer. It depends on Mg(2+) as a cofactor.

In terms of biological role, catalyzes the condensation of isopentenyl diphosphate (IPP) with allylic pyrophosphates generating different type of terpenoids. This is Isoprenyl transferase 2 from Nostoc sp. (strain PCC 7120 / SAG 25.82 / UTEX 2576).